Reading from the N-terminus, the 391-residue chain is 3-ketoacyl-CoA thiolase (391 aa).

Cys95 acts as the Acyl-thioester intermediate in catalysis. Active-site proton acceptor residues include His347 and Cys377.

The protein belongs to the thiolase-like superfamily. Thiolase family. In terms of assembly, heterotetramer of two alpha chains (FadB) and two beta chains (FadA).

Its subcellular location is the cytoplasm. It carries out the reaction an acyl-CoA + acetyl-CoA = a 3-oxoacyl-CoA + CoA. The protein operates within lipid metabolism; fatty acid beta-oxidation. In terms of biological role, catalyzes the final step of fatty acid oxidation in which acetyl-CoA is released and the CoA ester of a fatty acid two carbons shorter is formed. The polypeptide is 3-ketoacyl-CoA thiolase (Pseudomonas fluorescens (strain ATCC BAA-477 / NRRL B-23932 / Pf-5)).